Here is a 464-residue protein sequence, read N- to C-terminus: 26S proteasome regulatory subunit 7 homolog B (464 aa).

Position 246 to 253 (246 to 253 (GPPGSGKT)) interacts with ATP. Residue Lys-452 forms a Glycyl lysine isopeptide (Lys-Gly) (interchain with G-Cter in ubiquitin) linkage.

This sequence belongs to the AAA ATPase family. Component of the 19S regulatory particle (RP/PA700) base subcomplex of the 26S proteasome. The 26S proteasome is composed of a core protease (CP), known as the 20S proteasome, capped at one or both ends by the 19S regulatory particle (RP/PA700). The RP/PA700 complex is composed of at least 17 different subunits in two subcomplexes, the base and the lid, which form the portions proximal and distal to the 20S proteolytic core, respectively.

Its subcellular location is the cytoplasm. The protein localises to the nucleus. In terms of biological role, the 26S proteasome is involved in the ATP-dependent degradation of ubiquitinated proteins. The regulatory (or ATPase) complex confers ATP dependency and substrate specificity to the 26S complex. The polypeptide is 26S proteasome regulatory subunit 7 homolog B (RPT1B) (Arabidopsis thaliana (Mouse-ear cress)).